A 213-amino-acid polypeptide reads, in one-letter code: Small ribosomal subunit protein uS3c (213 aa).

One can recognise a KH type-2 domain in the interval Ile39–Gln109.

The protein belongs to the universal ribosomal protein uS3 family. Part of the 30S ribosomal subunit.

It localises to the plastid. It is found in the chloroplast. This is Small ribosomal subunit protein uS3c (rps3) from Mesostigma viride (Green alga).